Here is a 498-residue protein sequence, read N- to C-terminus: Cytochrome P450 monooxygenase 71 (498 aa).

Residues 7–24 (YVFALLGILATLYFVRWS) traverse the membrane as a helical segment. Asn-425 carries N-linked (GlcNAc...) asparagine glycosylation. Cys-440 provides a ligand contact to heme.

The protein belongs to the cytochrome P450 family. Heme is required as a cofactor.

Its subcellular location is the membrane. Its pathway is secondary metabolite biosynthesis. Cytochrome P450 monooxygenase that is able to use dehydroabietic acid and testosterone as substrates for oxidation, suggesting that the natural substrate(s) may be structurally related to steroid compounds. The sequence is that of Cytochrome P450 monooxygenase 71 from Postia placenta (strain ATCC 44394 / Madison 698-R) (Brown rot fungus).